A 249-amino-acid polypeptide reads, in one-letter code: RING finger protein 223 (249 aa).

Residues 1–44 (MSSGQQVWHTAVPPPRRSSSIASMPRSPSSAGSPRSPGTPGSER) are disordered. Residues 17-44 (RSSSIASMPRSPSSAGSPRSPGTPGSER) are compositionally biased toward low complexity. The RING-type zinc finger occupies 51–102 (CSICFSGYDNIFKTPKELSCTHVFCLECLARLAAAQPVGRPGGEAVPCPFCR). Residues 199-219 (LVSALLLMLFCVALWPVQCAL) traverse the membrane as a helical segment. Positions 230-249 (PPRPPATSTAASPLGPLTDN) are disordered. Residues 235–249 (ATSTAASPLGPLTDN) are compositionally biased toward low complexity.

It localises to the membrane. The sequence is that of RING finger protein 223 (RNF223) from Homo sapiens (Human).